Reading from the N-terminus, the 442-residue chain is Transcription factor MYCFIDRAFT_198930 (442 aa).

The interval Met1–Ser34 is disordered. Residues Cys36–Cys63 constitute a DNA-binding region (zn(2)-C6 fungal-type). Residues Lys74 to Leu107 form a disordered region. Residues Pro96–Leu107 show a composition bias toward polar residues.

It localises to the nucleus. Transcription factor that positively regulates the expression of the gene cluster that mediates the biosynthesis of an emodin derivative that may be involved in black Sigatoka disease of banana. In Pseudocercospora fijiensis (strain CIRAD86) (Black leaf streak disease fungus), this protein is Transcription factor MYCFIDRAFT_198930.